The following is a 280-amino-acid chain: GTP-binding protein rhoC (280 aa).

Positions threonine 13–alanine 59 are disordered. Positions methionine 33–alanine 59 are enriched in polar residues. GTP is bound at residue glycine 76–threonine 83. The Effector region motif lies at tyrosine 98 to tyrosine 106. Residues aspartate 125 to glutamine 129 and leucine 183 to aspartate 186 contribute to the GTP site. The tract at residues tryptophan 251–arginine 275 is disordered. Cysteine 277 is subject to Cysteine methyl ester. Cysteine 277 carries S-geranylgeranyl cysteine lipidation. Residues lysine 278 to leucine 280 constitute a propeptide, removed in mature form.

Belongs to the small GTPase superfamily. Rho family.

It is found in the cell membrane. This Emericella nidulans (strain FGSC A4 / ATCC 38163 / CBS 112.46 / NRRL 194 / M139) (Aspergillus nidulans) protein is GTP-binding protein rhoC (rhoC).